Consider the following 512-residue polypeptide: Cytochrome P450 monooxygenase astD (512 aa).

A helical transmembrane segment spans residues M19–Y39. 2 N-linked (GlcNAc...) asparagine glycosylation sites follow: N191 and N413. C449 serves as a coordination point for heme.

The protein belongs to the cytochrome P450 family. Requires heme as cofactor.

The protein resides in the membrane. It functions in the pathway secondary metabolite biosynthesis; terpenoid biosynthesis. Cytochrome P450 monooxygenase; part of the gene cluster that mediates the biosynthesis of astellolides, drimane-type sesquiterpene esters that show antimicrobial, anti-inflammatory, and anti-tumor activities. The first step in astellolide biosynthesis is performed by the sesquiterpene cyclase astC that catalyzes the formation of drimanyl pyrophosphate from farnesyl pyrophosphate. Drimanyl pyrophosphate is then dephosphorylated by the sesquiterpene phosphatase astI to produce drimanyl monophosphate which is further dephosphorylated to drim-8-ene-11-ol by atsK. Drim-8-ene-11-ol is converted to confertifolin, probably by the cytochrome P450 monooxygenase astD and/or the dehydrogenase astE. The cytochrome P450 monooxygenases astB, astF and astJ then hydroxylate confertifolin at C6, C14, or C15 to form trihydroxy confertifolin. The nonribosomal peptide synthetase astA catalyzes ester bond formation between trihydroxy contifolin and benzoic acid (BA) or 4-hydroxy benzoic acid (4HBA), leading to the formation of dideacetyl astellolides A and B, respectively. Finally, the O-acetyltransferase astG converts dideacetyl astellolides A and B into deacetyl astellolides A and B. In Aspergillus oryzae (strain ATCC 42149 / RIB 40) (Yellow koji mold), this protein is Cytochrome P450 monooxygenase astD.